The primary structure comprises 611 residues: MWTGGRRPGRLRRAASAADMEKLSALQEQKGELRKRLSYTTHKLEKLETEFDSTRHYLEIELRRAQEELDKVTEKLRRIQSNYMALQRINQELEDKLYRMGQHYEEEKRAMSHEIVALNSHLLEAKVTIDKLSEDNELYRKDCNLAAQLLQCSQTYGRVHKVSELPSDFQQRVSLHMEKHGCSLPSPLCHPSYADSVPTCVIAKVLEKPDPGSLSSRMSDASARDLAYRDGVENPGPRPPYKGDIYCSDTALYCPDERDHDRRPSVDTPVTDVGFLRAQNSTDSLAEEEEAEAAAFPEAYRREAFQGYAASLPTSSSYSSFSATSEEKEHAQASTLTASQQAIYLNSREELFSRKPPSATYGSSPRYAKAAATLGSPLEAQVAPGFARTVSPYPAEPYRYPASQQALMPPNLWSLRAKPSGNRLAAREDIRGQWRPLSVEDVGAYSYQAGAAGRAASPCNFSERFYGGGGGGGSPGKNAEGRASPLYASYKADSFSEGDDLSQGHLAEPCFLRAGGDLSLSPSRSADPLPGYATSDGDGDRLGVQLCGPGSSPEPEHGSRDSLEPSSMEASPEMHPPTRLSPQQAFPRTGGSGLSRKDSLTKAQLYGTLLN.

Tyr156 bears the Phosphotyrosine mark. Phosphoserine occurs at positions 219, 248, and 265. Position 268 is a phosphothreonine (Thr268). Phosphoserine is present on residues Ser284, Ser364, and Ser391. Arg399 carries the post-translational modification Asymmetric dimethylarginine. Phosphoserine occurs at positions 474, 484, 494, 496, 519, 521, and 525. Residues 520–611 (LSPSRSADPL…KAQLYGTLLN (92 aa)) form a disordered region. The segment covering 554–563 (EPEHGSRDSL) has biased composition (basic and acidic residues). A phosphoserine mark is found at Ser571 and Ser581.

Interacts with DLG4 and DLGAP1 and forms a ternary complex. Brain-specific. Expressed in neurons and rather enriched at synaptic junctions.

It is found in the cytoplasm. Its subcellular location is the membrane. Functionally, may sustain the structure of the postsynaptic density (PSD). The polypeptide is Brain-enriched guanylate kinase-associated protein (Begain) (Rattus norvegicus (Rat)).